We begin with the raw amino-acid sequence, 216 residues long: MVNRTAIIKQPDNISCFNDVYKLQKEYQEALILDNSNPDFIWIGEHQLCYTLGRGSNYDNLLFSLNDEKYDVFKIDRGGEVTCHMPGQLVTYLILDLKNFNKDLNWYLRKIEKIIIKILGNFNIDCHLKKGFTGVWIENKKIASIGIGCRRWITINGFSINFNCELENFNKIVPCGIENCLMANMIDYNKNLNIKEVKKIVKKIIQEEFNFDFVSK.

The BPL/LPL catalytic domain maps to 35–213; that stretch reads NSNPDFIWIG…IIQEEFNFDF (179 aa). Residues 77 to 84, 144 to 146, and 157 to 159 contribute to the substrate site; these read RGGEVTCH, SIG, and GFS. Cysteine 175 (acyl-thioester intermediate) is an active-site residue.

This sequence belongs to the LipB family.

The protein resides in the cytoplasm. The catalysed reaction is octanoyl-[ACP] + L-lysyl-[protein] = N(6)-octanoyl-L-lysyl-[protein] + holo-[ACP] + H(+). It participates in protein modification; protein lipoylation via endogenous pathway; protein N(6)-(lipoyl)lysine from octanoyl-[acyl-carrier-protein]: step 1/2. Functionally, catalyzes the transfer of endogenously produced octanoic acid from octanoyl-acyl-carrier-protein onto the lipoyl domains of lipoate-dependent enzymes. Lipoyl-ACP can also act as a substrate although octanoyl-ACP is likely to be the physiological substrate. This chain is Octanoyltransferase, found in Prochlorococcus marinus (strain MIT 9312).